Consider the following 429-residue polypeptide: Adenylosuccinate synthetase (429 aa).

GTP contacts are provided by residues 12–18 and 40–42; these read GDEGKGK and GHT. The active-site Proton acceptor is the aspartate 13. Mg(2+) is bound by residues aspartate 13 and glycine 40. Residues 13–16, 38–41, threonine 129, arginine 143, glutamine 223, threonine 238, and arginine 302 each bind IMP; these read DEGK and NAGH. Histidine 41 (proton donor) is an active-site residue. 298–304 contributes to the substrate binding site; the sequence is VVTGRKR. GTP is bound by residues arginine 304, 330-332, and 412-414; these read KLD and STS.

This sequence belongs to the adenylosuccinate synthetase family. In terms of assembly, homodimer. The cofactor is Mg(2+).

The protein localises to the cytoplasm. The catalysed reaction is IMP + L-aspartate + GTP = N(6)-(1,2-dicarboxyethyl)-AMP + GDP + phosphate + 2 H(+). The protein operates within purine metabolism; AMP biosynthesis via de novo pathway; AMP from IMP: step 1/2. Its function is as follows. Plays an important role in the de novo pathway of purine nucleotide biosynthesis. Catalyzes the first committed step in the biosynthesis of AMP from IMP. This Brucella suis (strain ATCC 23445 / NCTC 10510) protein is Adenylosuccinate synthetase.